The chain runs to 1608 residues: DNA-directed RNA polymerase III subunit rpc2 (1608 aa).

Zn(2+)-binding residues include cysteine 1557, cysteine 1560, cysteine 1569, and cysteine 1572. The C4-type zinc-finger motif lies at 1557-1572 (CKNCGFLGYEGYCQYC).

The protein belongs to the RNA polymerase beta chain family. In terms of assembly, component of the RNA polymerase III (Pol III) complex. Post-translationally, this protein undergoes a protein self splicing that involves a post-translational excision of the intervening region (intein) followed by peptide ligation.

Its subcellular location is the nucleus. The enzyme catalyses RNA(n) + a ribonucleoside 5'-triphosphate = RNA(n+1) + diphosphate. Functionally, DNA-dependent RNA polymerase catalyzes the transcription of DNA into RNA using the four ribonucleoside triphosphates as substrates. Second largest core component of RNA polymerase III which synthesizes small RNAs, such as 5S rRNA and tRNAs. Proposed to contribute to the polymerase catalytic activity and forms the polymerase active center together with the largest subunit. Pol III is composed of mobile elements and rpc2 is part of the core element with the central large cleft and probably a clamp element that moves to open and close the cleft. This is DNA-directed RNA polymerase III subunit rpc2 (polr3b) from Dictyostelium discoideum (Social amoeba).